Reading from the N-terminus, the 270-residue chain is Transcription factor PU.1 (270 aa).

The segment at 123-164 is disordered; the sequence is SLSPAQPSSDEEEGERQSPPLEVSDGEADGLEPGPGLLPGET. Phosphoserine is present on residues serine 140 and serine 146. The segment covering 153–164 has biased composition (low complexity); that stretch reads LEPGPGLLPGET. The segment at residues 170-253 is a DNA-binding region (ETS); sequence IRLYQFLLDL…VKKKLTYQFS (84 aa). DNA-binding residues include lysine 217, arginine 230, arginine 233, and lysine 243.

Belongs to the ETS family. As to quaternary structure, binds DNA as a monomer. Can form homomers. Directly interacts with CEBPD/NF-IL6-beta; this interaction does not affect DNA-binding properties of each partner. Interacts with NONO/p54(nrb). Interacts with RUNX1/AML1. Interacts with GFI1; the interaction represses SPI1 transcriptional activity, hence blocks SPI1-induced macrophage differentiation of myeloid progenitor cells. Interacts with CEBPE. Interacts with IRF4/Pip and IRF8. Interacts with JUN. Interacts with RB1. Interacts with TBP. In terms of tissue distribution, in the bone marrow, concentrated in hematopoietic stem cell, lymphoid progenitor, myeloid lineage (granulocyte macrophage progenitors, classical dendritic cells, monocytes) and B-cell clusters. Among B-cells, predominantly expressed in pre-B1 cells. Expressed in germinal center B-cells.

Its subcellular location is the nucleus. Its activity is regulated as follows. Transcriptional activity at macrophage-specific genes is inhibited by interaction with GFI1, which results in the inhibition of SPI1-induced macrophage differentiation of myeloid progenitor cells, but not that of the granulocyte lineage. Functionally, pioneer transcription factor, which controls hematopoietic cell fate by decompacting stem cell heterochromatin and allowing other transcription factors to enter otherwise inaccessible genomic sites. Once in open chromatin, can directly control gene expression by binding genetic regulatory elements and can also more broadly influence transcription by recruiting transcription factors, such as interferon regulatory factors (IRFs), to otherwise inaccessible genomic regions. Transcriptionally activates genes important for myeloid and lymphoid lineages, such as CSF1R. Transcriptional activation from certain promoters, possibly containing low affinity binding sites, is achieved cooperatively with other transcription factors. FCER1A transactivation is achieved in cooperation with GATA1. May be particularly important for the pro- to pre-B cell transition. Binds (via the ETS domain) onto the purine-rich DNA core sequence 5'-GAGGAA-3', also known as the PU-box. In vitro can bind RNA and interfere with pre-mRNA splicing. The protein is Transcription factor PU.1 (SPI1) of Homo sapiens (Human).